We begin with the raw amino-acid sequence, 87 residues long: Protein anon-73B1 (87 aa).

A helical transmembrane segment spans residues 25–47 (LLIRYGLYVGALFQFVCISAAVL). The interval 52-87 (PDVNSNPETGEVTEREGEPVRTRLHKIRKLEKKKRR) is disordered. Residues 63–72 (VTEREGEPVR) show a composition bias toward basic and acidic residues. Basic residues predominate over residues 73 to 87 (TRLHKIRKLEKKKRR).

The protein belongs to the UPF0239 family.

It is found in the membrane. This is Protein anon-73B1 from Drosophila erecta (Fruit fly).